The primary structure comprises 446 residues: Protein odr-4 homolog (446 aa).

Residues 76 to 96 (ASQVGRMLPGGLMVLGVFLMT) traverse the membrane as a helical segment. The segment covering 394 to 415 (HPEKRESEPASQHLESKPENKA) has biased composition (basic and acidic residues). Residues 394-417 (HPEKRESEPASQHLESKPENKARS) form a disordered region. A helical transmembrane segment spans residues 426-446 (GLVISTIVASIAIIISFYYIM).

Belongs to the ODR-4 family.

Its subcellular location is the membrane. Functionally, may play a role in the trafficking of a subset of G-protein coupled receptors. This Xenopus laevis (African clawed frog) protein is Protein odr-4 homolog (odr4).